We begin with the raw amino-acid sequence, 34 residues long: Antimicrobial peptide Alo-2 (34 aa).

Cystine bridges form between Cys-1–Cys-18, Cys-8–Cys-22, and Cys-17–Cys-33.

It is found in the secreted. In terms of biological role, has antifungal activity against C.glabrata. The sequence is that of Antimicrobial peptide Alo-2 from Acrocinus longimanus (Giant harlequin beetle).